Reading from the N-terminus, the 263-residue chain is Indolethylamine N-methyltransferase (263 aa).

K13 bears the N6-succinyllysine mark. S-adenosyl-L-methionine-binding positions include Y20, Y25, G63, Y69, 85–87, and N90; that span reads DFT. K96 is subject to N6-succinyllysine. Residues 142–143 and L163 contribute to the S-adenosyl-L-methionine site; that span reads DV.

It belongs to the class I-like SAM-binding methyltransferase superfamily. NNMT/PNMT/TEMT family. In terms of assembly, monomer. In terms of tissue distribution, widely expressed. The highest levels were in thyroid, adrenal gland, adult and fetal lung. Intermediate levels in heart, placenta, skeletal muscle, testis, small intestine, pancreas, stomach, spinal cord, lymph node and trachea. Very low levels in adult and fetal kidney and liver, in adult spleen, thymus, ovary, colon and bone marrow. Not expressed in peripheral blood leukocytes and brain.

It localises to the cytoplasm. It carries out the reaction a tertiary amine + S-adenosyl-L-methionine = a methylated tertiary amine + S-adenosyl-L-homocysteine + H(+). It catalyses the reaction a secondary amine + S-adenosyl-L-methionine = a methylated secondary amine + S-adenosyl-L-homocysteine + H(+). The enzyme catalyses a primary amine + S-adenosyl-L-methionine = a methylated primary amine + S-adenosyl-L-homocysteine + H(+). The catalysed reaction is dimethyl sulfide + S-adenosyl-L-methionine = trimethylsulfonium + S-adenosyl-L-homocysteine. Its function is as follows. Functions as a thioether S-methyltransferase and is active with a variety of thioethers and the corresponding selenium and tellurium compounds, including 3-methylthiopropionaldehyde, dimethyl selenide, dimethyl telluride, 2-methylthioethylamine, 2-methylthioethanol, methyl-n-propyl sulfide and diethyl sulfide. Plays an important role in the detoxification of selenium compounds. Catalyzes the N-methylation of tryptamine and structurally related compounds. The sequence is that of Indolethylamine N-methyltransferase (INMT) from Homo sapiens (Human).